Reading from the N-terminus, the 320-residue chain is Probable L-ascorbate peroxidase 5, chloroplastic (320 aa).

Residues 1–42 (MAVVHRILRRGLSAASPLPSLRGLLLVSPQELGRRPASSSSS) constitute a chloroplast transit peptide. The Proton acceptor role is filled by histidine 80. Histidine 209 lines the heme b pocket. Threonine 210 provides a ligand contact to K(+). The tract at residues 213–241 (RARPERSGWGKPETKYTENGPGAPGGQSW) is disordered. The segment covering 214–228 (ARPERSGWGKPETKY) has biased composition (basic and acidic residues). K(+) is bound by residues threonine 242 and aspartate 249.

The protein belongs to the peroxidase family. Ascorbate peroxidase subfamily. It depends on heme b as a cofactor. In terms of tissue distribution, expressed in leaves, stems and flowers.

Its subcellular location is the plastid. The protein localises to the chloroplast stroma. It carries out the reaction L-ascorbate + H2O2 = L-dehydroascorbate + 2 H2O. Plays a key role in hydrogen peroxide removal. This is Probable L-ascorbate peroxidase 5, chloroplastic from Oryza sativa subsp. japonica (Rice).